Reading from the N-terminus, the 216-residue chain is Peptide methionine sulfoxide reductase MsrA (216 aa).

C54 is an active-site residue.

This sequence belongs to the MsrA Met sulfoxide reductase family.

It catalyses the reaction L-methionyl-[protein] + [thioredoxin]-disulfide + H2O = L-methionyl-(S)-S-oxide-[protein] + [thioredoxin]-dithiol. It carries out the reaction [thioredoxin]-disulfide + L-methionine + H2O = L-methionine (S)-S-oxide + [thioredoxin]-dithiol. Has an important function as a repair enzyme for proteins that have been inactivated by oxidation. Catalyzes the reversible oxidation-reduction of methionine sulfoxide in proteins to methionine. This chain is Peptide methionine sulfoxide reductase MsrA, found in Xanthomonas campestris pv. phaseoli.